The sequence spans 115 residues: UPF0102 protein NMA0341 (115 aa).

This sequence belongs to the UPF0102 family.

The polypeptide is UPF0102 protein NMA0341 (Neisseria meningitidis serogroup A / serotype 4A (strain DSM 15465 / Z2491)).